An 84-amino-acid chain; its full sequence is Large ribosomal subunit protein bL27 (84 aa).

The segment at methionine 1–serine 29 is disordered.

The protein belongs to the bacterial ribosomal protein bL27 family.

This chain is Large ribosomal subunit protein bL27, found in Chlorobium phaeobacteroides (strain BS1).